Here is a 177-residue protein sequence, read N- to C-terminus: Phycocyanin PC645 beta subunit (177 aa).

Tyr-18 is a mesobiliverdin binding site. The (2R,3E)-phycocyanobilin site is built by Lys-28, Asn-35, and Asp-39. Residues Cys-50, Asp-54, and Cys-61 each contribute to the 15,16-dihydrobiliverdin site. Positions 72, 77, 82, 84, and 85 each coordinate (2R,3E)-phycocyanobilin. Gln-148 contributes to the 15,16-dihydrobiliverdin binding site. (2R,3E)-phycocyanobilin contacts are provided by Pro-154, Gly-156, and Cys-158.

This sequence belongs to the phycobiliprotein family. In terms of assembly, heterotetramer of 2 different alpha chains and 2 identical beta chains which form 2 alpha-beta heterodimers within the heterotetramer. Contains two phycocyanobilin chromophores, one mesobiliverdin chromophore and one 15,16-dihydrobiliverdin chromophore with binding mediated by both the alpha and beta subunits.

The protein resides in the plastid. It is found in the chloroplast thylakoid membrane. In terms of biological role, light-harvesting photosynthetic tetrapyrrole chromophore-protein from the phycobiliprotein complex. This chain is Phycocyanin PC645 beta subunit, found in Chroomonas sp. (strain CCMP270).